Here is a 1151-residue protein sequence, read N- to C-terminus: Syntaxin-binding protein 5 (1151 aa).

Residues 14 to 34 (TAGSSSASQQQQQQHPPGNRE) form a disordered region. The span at 17–27 (SSSASQQQQQQ) shows a compositional bias: low complexity. WD repeat units follow at residues 61–94 (SALA…CYCQ), 101–140 (VIQL…SLKF), 145–181 (VTFC…GYVI), 200–234 (HISD…DYRY), 240–272 (IHSV…PAKP), 294–336 (PILK…KSTA), 344–378 (IVDF…LIDL), 400–477 (TCCE…YKLK), 505–619 (QIIS…ELVI), and 633–695 (TSLA…SGAG). Disordered stretches follow at residues 555–595 (ETPE…GLRD) and 674–729 (SNDP…EQKM). Position 692 is a phosphoserine (S692). Low complexity predominate over residues 712–721 (SPTSGSSSPH). S723 bears the Phosphoserine; by PKA mark. At S759 the chain carries Phosphoserine. T762 carries the phosphothreonine modification. At S782 the chain carries Phosphoserine. T784 is modified (phosphothreonine). The residue at position 785 (S785) is a Phosphoserine. 4 WD repeats span residues 794–851 (ISAL…SGTI), 860–934 (RMAF…QNCA), 939–983 (ITET…LDVY), and 997–1020 (CFTN…TYSQ). Over residues 881–892 (HNVPEEKDEKEK) the composition is skewed to basic and acidic residues. The interval 881-906 (HNVPEEKDEKEKLKKRRPVSVSPSSS) is disordered. A phosphoserine mark is found at S900 and S902. A Phosphothreonine modification is found at T1039. 2 positions are modified to phosphoserine: S1058 and S1131. Residues 1086–1146 (GIEGVKGAAS…HEIMLKYKDK (61 aa)) enclose the v-SNARE coiled-coil homology domain.

It belongs to the WD repeat L(2)GL family. Interacts with STX1A and STX1B via its v-SNARE homology domain. Part of a complex that contains STX1, STXBP5, SNAP25 and SYT1. Part of a complex that contains STXBP5, STX4A and SNAP23.

It localises to the cytoplasm. The protein resides in the cell membrane. It is found in the cytoplasmic vesicle membrane. The protein localises to the cytoplasmic vesicle. Its subcellular location is the secretory vesicle. It localises to the synaptic vesicle. The protein resides in the synapse. Functionally, plays a regulatory role in calcium-dependent exocytosis and neurotransmitter release. Inhibits membrane fusion between transport vesicles and the plasma membrane. May modulate the assembly of trans-SNARE complexes between transport vesicles and the plasma membrane. Inhibits translocation of GLUT4 from intracellular vesicles to the plasma membrane. Competes with STXBP1 for STX1 binding. This is Syntaxin-binding protein 5 (STXBP5) from Homo sapiens (Human).